The following is a 490-amino-acid chain: Cytochrome P450 2C38 (490 aa).

Residues 1 to 20 form the signal peptide; the sequence is MDLVTFLVLTLSSLILLSLW. Heme is bound at residue C435.

It belongs to the cytochrome P450 family. It depends on heme as a cofactor. Liver, brain, kidney, and intestine, with trace amounts in lung and heart.

Its subcellular location is the endoplasmic reticulum membrane. The protein localises to the microsome membrane. It carries out the reaction an organic molecule + reduced [NADPH--hemoprotein reductase] + O2 = an alcohol + oxidized [NADPH--hemoprotein reductase] + H2O + H(+). It catalyses the reaction (5Z,8Z,11Z,14Z)-eicosatetraenoate + reduced [NADPH--hemoprotein reductase] + O2 = 11,12-epoxy-(5Z,8Z,14Z)-eicosatrienoate + oxidized [NADPH--hemoprotein reductase] + H2O + H(+). It functions in the pathway lipid metabolism; arachidonate metabolism. A cytochrome P450 monooxygenase that primarily catalyzes the epoxidation of 11,12 double bond of (5Z,8Z,11Z,14Z)-eicosatetraenoic acid (arachidonate) forming 11,12-epoxyeicosatrienoic acid (11,12-EET) regioisomer. Mechanistically, uses molecular oxygen inserting one oxygen atom into a substrate, and reducing the second into a water molecule, with two electrons provided by NADPH via cytochrome P450 reductase (CPR; NADPH--hemoprotein reductase). This Mus musculus (Mouse) protein is Cytochrome P450 2C38.